Consider the following 373-residue polypeptide: 4-hydroxy-3-methylbut-2-en-1-yl diphosphate synthase (flavodoxin) (373 aa).

Cys270, Cys273, Cys305, and Glu312 together coordinate [4Fe-4S] cluster.

Belongs to the IspG family. [4Fe-4S] cluster serves as cofactor.

It catalyses the reaction (2E)-4-hydroxy-3-methylbut-2-enyl diphosphate + oxidized [flavodoxin] + H2O + 2 H(+) = 2-C-methyl-D-erythritol 2,4-cyclic diphosphate + reduced [flavodoxin]. It participates in isoprenoid biosynthesis; isopentenyl diphosphate biosynthesis via DXP pathway; isopentenyl diphosphate from 1-deoxy-D-xylulose 5-phosphate: step 5/6. Converts 2C-methyl-D-erythritol 2,4-cyclodiphosphate (ME-2,4cPP) into 1-hydroxy-2-methyl-2-(E)-butenyl 4-diphosphate. This is 4-hydroxy-3-methylbut-2-en-1-yl diphosphate synthase (flavodoxin) from Vibrio atlanticus (strain LGP32) (Vibrio splendidus (strain Mel32)).